Reading from the N-terminus, the 258-residue chain is Imidazole glycerol phosphate synthase subunit HisF (258 aa).

Active-site residues include aspartate 12 and aspartate 131.

It belongs to the HisA/HisF family. As to quaternary structure, heterodimer of HisH and HisF.

Its subcellular location is the cytoplasm. The catalysed reaction is 5-[(5-phospho-1-deoxy-D-ribulos-1-ylimino)methylamino]-1-(5-phospho-beta-D-ribosyl)imidazole-4-carboxamide + L-glutamine = D-erythro-1-(imidazol-4-yl)glycerol 3-phosphate + 5-amino-1-(5-phospho-beta-D-ribosyl)imidazole-4-carboxamide + L-glutamate + H(+). It participates in amino-acid biosynthesis; L-histidine biosynthesis; L-histidine from 5-phospho-alpha-D-ribose 1-diphosphate: step 5/9. Its function is as follows. IGPS catalyzes the conversion of PRFAR and glutamine to IGP, AICAR and glutamate. The HisF subunit catalyzes the cyclization activity that produces IGP and AICAR from PRFAR using the ammonia provided by the HisH subunit. The protein is Imidazole glycerol phosphate synthase subunit HisF of Pseudarthrobacter chlorophenolicus (strain ATCC 700700 / DSM 12829 / CIP 107037 / JCM 12360 / KCTC 9906 / NCIMB 13794 / A6) (Arthrobacter chlorophenolicus).